A 1748-amino-acid chain; its full sequence is Flagellar attachment zone protein 1 (1748 aa).

Coiled coils occupy residues 613-657, 684-864, and 903-1663; these read REQE…KLQK, VTLD…HKVR, and NDHM…SALE. 41 consecutive repeat copies span residues 1012-1025, 1026-1039, 1040-1053, 1054-1067, 1068-1081, 1082-1095, 1096-1109, 1110-1123, 1124-1137, 1138-1151, 1152-1165, 1166-1179, 1180-1193, 1194-1207, 1208-1221, 1222-1235, 1236-1249, 1250-1263, 1264-1277, 1278-1291, 1292-1305, 1306-1319, 1320-1333, 1334-1347, 1348-1361, 1362-1375, 1376-1389, 1390-1403, 1404-1417, 1418-1431, 1432-1445, 1446-1459, 1460-1473, 1474-1487, 1488-1501, 1502-1515, 1516-1529, 1530-1543, 1544-1557, 1558-1571, and 1572-1585. A 41 X 14 AA tandem repeats of E-E-L-E-L-K-[VA]-A-E-N-E-K-L-A region spans residues 1012–1529; the sequence is EELELKAAEN…LKAAENEKLA (518 aa).

It localises to the cell projection. Its subcellular location is the cilium. The protein localises to the flagellum. Functionally, a component of FAZ filament that is required for correct FAZ assembly and attachment. Not essential for new flagellum growth. In Trypanosoma brucei gambiense (strain MHOM/CI/86/DAL972), this protein is Flagellar attachment zone protein 1.